The primary structure comprises 147 residues: Hemoglobin subunit beta-1 (147 aa).

The Globin domain occupies 3 to 147 (EWTAAERRHV…VVSALGRQYH (145 aa)). Heme b is bound by residues H64 and H93.

This sequence belongs to the globin family. As to quaternary structure, hb 1 is a heterotetramer of two alpha-1 and two beta-1 chains. Red blood cells.

In terms of biological role, involved in oxygen transport from gills to the various peripheral tissues. This chain is Hemoglobin subunit beta-1 (hbb1), found in Gadus morhua (Atlantic cod).